The chain runs to 757 residues: Probable tRNA (uracil-O(2)-)-methyltransferase (757 aa).

Disordered regions lie at residues 55 to 93 (EARG…GPEQ) and 108 to 138 (QQEE…GDFP). Residues 72-84 (PGPGQGSPGGGPG) are compositionally biased toward gly residues. S78 carries the post-translational modification Phosphoserine. Over residues 123–136 (DSGHPGHAEGREGD) the composition is skewed to basic and acidic residues. S533 bears the Phosphoserine mark. The C3H1-type zinc-finger motif lies at 713–743 (ACKTRLCWFFMHHPDGCALSTDCCPFAHGPA).

This sequence belongs to the TRM44 family.

It localises to the cytoplasm. It carries out the reaction uridine(44) in tRNA(Ser) + S-adenosyl-L-methionine = 2'-O-methyluridine(44) in tRNA(Ser) + S-adenosyl-L-homocysteine + H(+). Probable adenosyl-L-methionine (AdoMet)-dependent tRNA (uracil-O(2)-)-methyltransferase. The protein is Probable tRNA (uracil-O(2)-)-methyltransferase (TRMT44) of Homo sapiens (Human).